The primary structure comprises 250 residues: Probable transcriptional regulatory protein Rxyl_1318 (250 aa).

Belongs to the TACO1 family.

It is found in the cytoplasm. The sequence is that of Probable transcriptional regulatory protein Rxyl_1318 from Rubrobacter xylanophilus (strain DSM 9941 / JCM 11954 / NBRC 16129 / PRD-1).